The chain runs to 348 residues: Selenide, water dikinase (348 aa).

C17 is an active-site residue. ATP contacts are provided by residues K20 and 47–49 (RAD). Residue D50 coordinates Mg(2+). ATP is bound by residues D67, D90, and 138–140 (GHT). D90 contacts Mg(2+). Mg(2+) is bound at residue D226.

This sequence belongs to the selenophosphate synthase 1 family. Class I subfamily. In terms of assembly, homodimer. Requires Mg(2+) as cofactor.

It catalyses the reaction hydrogenselenide + ATP + H2O = selenophosphate + AMP + phosphate + 2 H(+). Functionally, synthesizes selenophosphate from selenide and ATP. The sequence is that of Selenide, water dikinase from Pelobacter propionicus (strain DSM 2379 / NBRC 103807 / OttBd1).